The following is a 384-amino-acid chain: Guanine nucleotide-binding protein alpha-1 subunit (384 aa).

A lipid anchor (N-myristoyl glycine) is attached at G2. C5 carries the S-palmitoyl cysteine lipid modification. Positions 38-384 (HIQKLLLLGA…RRNLFEAGLL (347 aa)) constitute a G-alpha domain. Positions 41–54 (KLLLLGAGESGKST) are G1 motif. GTP is bound by residues E49, S50, G51, K52, S53, T54, L188, Y189, T194, G222, N288, K289, D291, and A356. S53 provides a ligand contact to Mg(2+). The segment at 186-194 (DVLYARVRT) is G2 motif. T194 lines the Mg(2+) pocket. Residues 215-224 (YRLFDVGGQR) form a G3 motif region. The tract at residues 284–291 (MLFLNKFD) is G4 motif. A G5 motif region spans residues 354–359 (TTALDQ).

Belongs to the G-alpha family. In terms of assembly, g proteins are composed of 3 units; alpha, beta and gamma. The alpha chain contains the guanine nucleotide binding site. The cofactor is Mg(2+).

Guanine nucleotide-binding proteins (G proteins) are involved as modulators or transducers in various transmembrane signaling systems. This is Guanine nucleotide-binding protein alpha-1 subunit (GPA1) from Lupinus luteus (European yellow lupine).